The primary structure comprises 520 residues: Developmental regulatory protein wetA (520 aa).

Polar residues-rich tracts occupy residues 109–118 (TATHALSISP), 155–165 (QSFSPSLMRSS), and 378–392 (SSQK…SQVH). Disordered stretches follow at residues 109–165 (TATH…MRSS), 378–454 (SSQK…SNKS), and 468–496 (KKIL…RRRK). Positions 420 to 429 (PTHRRTHSRK) are enriched in basic residues. The segment covering 445-454 (SSSSRGSNKS) has biased composition (low complexity).

This sequence belongs to the wetA family.

Functionally, brlA, abaA and wetA are pivotal regulators of conidiophore development and conidium maturation. They act individually and together to regulate their own expression and that of numerous other sporulation-specific genes. The polypeptide is Developmental regulatory protein wetA (Penicillium roqueforti (strain FM164)).